Consider the following 72-residue polypeptide: DNA-directed RNA polymerase subunit epsilon (72 aa).

The protein belongs to the RNA polymerase subunit epsilon family. In terms of assembly, RNAP is composed of a core of 2 alpha, a beta and a beta' subunit. The core is associated with a delta subunit, and at least one of epsilon or omega. When a sigma factor is associated with the core the holoenzyme is formed, which can initiate transcription.

It carries out the reaction RNA(n) + a ribonucleoside 5'-triphosphate = RNA(n+1) + diphosphate. In terms of biological role, a non-essential component of RNA polymerase (RNAP). This Staphylococcus haemolyticus (strain JCSC1435) protein is DNA-directed RNA polymerase subunit epsilon.